The following is a 137-amino-acid chain: Small heat shock protein IbpA (137 aa).

The sHSP domain maps to S28 to N137.

The protein belongs to the small heat shock protein (HSP20) family. As to quaternary structure, monomer. Forms homomultimers of about 100-150 subunits at optimal growth temperatures. Conformation changes to monomers at high temperatures or high ionic concentrations.

The protein localises to the cytoplasm. Associates with aggregated proteins, together with IbpB, to stabilize and protect them from irreversible denaturation and extensive proteolysis during heat shock and oxidative stress. Aggregated proteins bound to the IbpAB complex are more efficiently refolded and reactivated by the ATP-dependent chaperone systems ClpB and DnaK/DnaJ/GrpE. Its activity is ATP-independent. The sequence is that of Small heat shock protein IbpA from Citrobacter koseri (strain ATCC BAA-895 / CDC 4225-83 / SGSC4696).